We begin with the raw amino-acid sequence, 420 residues long: Glucose-1-phosphate adenylyltransferase (420 aa).

Alpha-D-glucose 1-phosphate is bound by residues Tyr107, Gly172, 187–188 (EK), and Ser205.

The protein belongs to the bacterial/plant glucose-1-phosphate adenylyltransferase family. In terms of assembly, homotetramer.

It carries out the reaction alpha-D-glucose 1-phosphate + ATP + H(+) = ADP-alpha-D-glucose + diphosphate. It participates in glycan biosynthesis; glycogen biosynthesis. In terms of biological role, involved in the biosynthesis of ADP-glucose, a building block required for the elongation reactions to produce glycogen. Catalyzes the reaction between ATP and alpha-D-glucose 1-phosphate (G1P) to produce pyrophosphate and ADP-Glc. In Bradyrhizobium diazoefficiens (strain JCM 10833 / BCRC 13528 / IAM 13628 / NBRC 14792 / USDA 110), this protein is Glucose-1-phosphate adenylyltransferase.